The chain runs to 316 residues: MTKEFHHVTVLLHETVDMLDIKPDGIYVDATLGGSGHSAYLLSKLGEEGHLYCFDQDQKAIDNAQVTLKSYIDKGQVTFIKDNFRHLKARLTALGVDEIDGILYDLGVSSPQLDERERGFSYKQDAPLDMRMDRQSLLTAYEVVNTYPFNDLVKIFFKYGEDKFSKQIARKIEQARAIKPIETTTELAELIKAAKPAKELKKKGHPAKQIFQAIRIEVNDELGAADESIQEAMELLALDGRISVITFHSLEDRLTKQLFKEASTVDVPKGLPLIPEDMKPKFELVSRKPILPSHSELAANKRAHSAKLRVAKKIRK.

S-adenosyl-L-methionine contacts are provided by residues 35–37 (SGH), D55, F84, D105, and Q112.

It belongs to the methyltransferase superfamily. RsmH family.

It localises to the cytoplasm. The enzyme catalyses cytidine(1402) in 16S rRNA + S-adenosyl-L-methionine = N(4)-methylcytidine(1402) in 16S rRNA + S-adenosyl-L-homocysteine + H(+). Its function is as follows. Specifically methylates the N4 position of cytidine in position 1402 (C1402) of 16S rRNA. In Streptococcus pyogenes serotype M6 (strain ATCC BAA-946 / MGAS10394), this protein is Ribosomal RNA small subunit methyltransferase H.